The chain runs to 75 residues: Cytochrome c oxidase subunit 6C (75 aa).

The Mitochondrial matrix segment spans residues 1–13 (MAPEVLPKPRMRG). Residues 14–54 (LLARRLRNHMAVAFVLSLGVAALYKFRVADQRKKAYADFYR) traverse the membrane as a helical segment. Over 55–75 (NYDVMKDFEEMRKAGIFQSVK) the chain is Mitochondrial intermembrane.

Belongs to the cytochrome c oxidase subunit 6c family. Component of the cytochrome c oxidase (complex IV, CIV), a multisubunit enzyme composed of 14 subunits. The complex is composed of a catalytic core of 3 subunits MT-CO1, MT-CO2 and MT-CO3, encoded in the mitochondrial DNA, and 11 supernumerary subunits COX4I1 (or COX4I2), COX5A, COX5B, COX6A1 (or COX6A2), COX6B1 (or COX6B2), COX6C, COX7A2 (or COX7A1), COX7B, COX7C, COX8A and NDUFA4, which are encoded in the nuclear genome. The complex exists as a monomer or a dimer and forms supercomplexes (SCs) in the inner mitochondrial membrane with NADH-ubiquinone oxidoreductase (complex I, CI) and ubiquinol-cytochrome c oxidoreductase (cytochrome b-c1 complex, complex III, CIII), resulting in different assemblies (supercomplex SCI(1)III(2)IV(1) and megacomplex MCI(2)III(2)IV(2)).

Its subcellular location is the mitochondrion inner membrane. Its pathway is energy metabolism; oxidative phosphorylation. Component of the cytochrome c oxidase, the last enzyme in the mitochondrial electron transport chain which drives oxidative phosphorylation. The respiratory chain contains 3 multisubunit complexes succinate dehydrogenase (complex II, CII), ubiquinol-cytochrome c oxidoreductase (cytochrome b-c1 complex, complex III, CIII) and cytochrome c oxidase (complex IV, CIV), that cooperate to transfer electrons derived from NADH and succinate to molecular oxygen, creating an electrochemical gradient over the inner membrane that drives transmembrane transport and the ATP synthase. Cytochrome c oxidase is the component of the respiratory chain that catalyzes the reduction of oxygen to water. Electrons originating from reduced cytochrome c in the intermembrane space (IMS) are transferred via the dinuclear copper A center (CU(A)) of subunit 2 and heme A of subunit 1 to the active site in subunit 1, a binuclear center (BNC) formed by heme A3 and copper B (CU(B)). The BNC reduces molecular oxygen to 2 water molecules using 4 electrons from cytochrome c in the IMS and 4 protons from the mitochondrial matrix. The chain is Cytochrome c oxidase subunit 6C (COX6C) from Homo sapiens (Human).